Here is a 379-residue protein sequence, read N- to C-terminus: Chaperone protein DnaJ (379 aa).

The region spanning Asp5–Gly69 is the J domain. A CR-type zinc finger spans residues Gly136–Thr218. Zn(2+) is bound by residues Cys149, Cys152, Cys166, Cys169, Cys192, Cys195, Cys206, and Cys209. 4 CXXCXGXG motif repeats span residues Cys149 to Gly156, Cys166 to Gly173, Cys192 to Gly199, and Cys206 to Gly213.

Belongs to the DnaJ family. As to quaternary structure, homodimer. Zn(2+) serves as cofactor.

The protein localises to the cytoplasm. In terms of biological role, participates actively in the response to hyperosmotic and heat shock by preventing the aggregation of stress-denatured proteins and by disaggregating proteins, also in an autonomous, DnaK-independent fashion. Unfolded proteins bind initially to DnaJ; upon interaction with the DnaJ-bound protein, DnaK hydrolyzes its bound ATP, resulting in the formation of a stable complex. GrpE releases ADP from DnaK; ATP binding to DnaK triggers the release of the substrate protein, thus completing the reaction cycle. Several rounds of ATP-dependent interactions between DnaJ, DnaK and GrpE are required for fully efficient folding. Also involved, together with DnaK and GrpE, in the DNA replication of plasmids through activation of initiation proteins. This chain is Chaperone protein DnaJ, found in Staphylococcus aureus (strain bovine RF122 / ET3-1).